The sequence spans 115 residues: Nascent polypeptide-associated complex protein (115 aa).

Positions 6–72 (PMNPKQLKKL…SEEEKAIINI (67 aa)) constitute an NAC-A/B domain.

Belongs to the NAC-alpha family. As to quaternary structure, homodimer. Interacts with the ribosome. Binds ribosomal RNA.

Its function is as follows. Contacts the emerging nascent chain on the ribosome. This is Nascent polypeptide-associated complex protein from Pyrococcus horikoshii (strain ATCC 700860 / DSM 12428 / JCM 9974 / NBRC 100139 / OT-3).